A 461-amino-acid polypeptide reads, in one-letter code: Fumarate hydratase class II (461 aa).

Residues S97–T99, H127–D130, S137–N139, and T185 contribute to the substrate site. Catalysis depends on H186, which acts as the Proton donor/acceptor. S316 is a catalytic residue. Residues S317 and K322 to N324 contribute to the substrate site.

Belongs to the class-II fumarase/aspartase family. Fumarase subfamily. In terms of assembly, homotetramer.

The protein resides in the cytoplasm. It carries out the reaction (S)-malate = fumarate + H2O. It participates in carbohydrate metabolism; tricarboxylic acid cycle; (S)-malate from fumarate: step 1/1. In terms of biological role, involved in the TCA cycle. Catalyzes the stereospecific interconversion of fumarate to L-malate. In Staphylococcus aureus (strain MSSA476), this protein is Fumarate hydratase class II.